A 271-amino-acid polypeptide reads, in one-letter code: Calretinin (271 aa).

EF-hand domains are found at residues 16-51 (LTASQFLEIWKHFDADGNGYIEGKELENFFQELEKA), 63-98 (NFGEKMKEFMQKYDKNSDGKIEMAELAQILPTEENF), 107-142 (GSSAEFMEAWRKYDTDRSGYIEANELKGFLSDLLKK), 151-186 (KLQEYTQTILRMFDLNGDGKLGLSEMSRLLPVQENF), 195-230 (LTSEEFNAIFTFYDKDRSGYIDEHELDALLKDLYEK), and 235-270 (MNIQQLTNYRKSVMSLAEAGKLYRKDLEIVLCSEPP). Ca(2+)-binding residues include aspartate 29, aspartate 31, asparagine 33, tyrosine 35, glutamate 40, aspartate 76, asparagine 78, aspartate 80, lysine 82, glutamate 87, aspartate 120, aspartate 122, serine 124, tyrosine 126, glutamate 131, aspartate 164, asparagine 166, aspartate 168, lysine 170, glutamate 175, aspartate 208, aspartate 210, serine 212, tyrosine 214, and glutamate 219. At tyrosine 214 the chain carries Phosphotyrosine.

Belongs to the calbindin family. Brain.

The protein localises to the synapse. It is found in the cell projection. Its subcellular location is the dendrite. In terms of biological role, calcium-binding protein involved in calcium homeostasis and signal transduction. It plays a critical role in buffering intracellular calcium levels and modulating calcium-dependent signaling pathways. Predominantly expressed in specific neuronal populations, influences synaptic plasticity and neuronal excitability, contributing to learning and memory. During embryonic development, it facilitates neuronal differentiation and maturation. The polypeptide is Calretinin (Homo sapiens (Human)).